The sequence spans 139 residues: MTEKRFAGTRIEVNGIVVAKITSFTHSLEVEEADVTGLGDVDEGSSVFRQKFIASAIGETAAMEGVVLVDDAGQSELKRVAESGQDAVVKHTDENGNGYELTGFFTTYEEEGSVSEGVYTFSGEFRVNEKSVVSGDESA.

This is an uncharacterized protein from Halalkalibacterium halodurans (strain ATCC BAA-125 / DSM 18197 / FERM 7344 / JCM 9153 / C-125) (Bacillus halodurans).